The chain runs to 657 residues: Transcription factor 12 (657 aa).

Positions 1–20 (MDEKGGTTSWGTSGQPSPSY) are enriched in polar residues. Disordered regions lie at residues 1-76 (MDEK…SGLS), 89-285 (LGSP…QTGD), 297-340 (PDHT…YENS), 459-555 (VSAQ…ERRM), and 628-657 (KVSAVSAEPPTPHPGSHPGLSETTNPMGHM). Positions 30–43 (HYSDHLNDSRKGTH) are enriched in basic and acidic residues. 2 stretches are compositionally biased toward polar residues: residues 49–70 (TPFSNSNLIGKTSGRGSFSLYS) and 93–112 (AQLSSSGKPETPYYSFSATS). The leucine-zipper stretch occupies residues 68-89 (LYSRDSGLSGCQSSLLRQELGL). The Nuclear localization signal motif lies at 130 to 136 (KKVRKVP). Composition is skewed to polar residues over residues 168-193 (MFASTFFMQDGTHSSSDLWSSSNGMS), 202-216 (GTSTSHMSQSGSYGS), and 230-254 (VSPTDINTSLPPMSSFHRGSTSSSP). Residues 300 to 311 (TSSSFPSNPSTP) are compositionally biased toward low complexity. Over residues 312–340 (VGSPSPLTGASQWSRSGGQAPSSPNYENS) the composition is skewed to polar residues. Basic and acidic residues-rich tracts occupy residues 493–505 (IKSEHKEKDENIH), 511–526 (DDMKSDDESSQKDIKV), and 543–555 (PEQKIEREKERRM). One can recognise a bHLH domain in the interval 552-605 (ERRMANNARERLRVRDINEAFKELGRMCQLHLKSEKPQTKLLILHQAVAVILSL). The class A specific domain stretch occupies residues 607 to 630 (QQVRERNLNPKAACLKRREEEKVS). Over residues 648–657 (SETTNPMGHM) the composition is skewed to polar residues.

As to quaternary structure, efficient DNA binding requires dimerization with another bHLH protein. Forms homo- or heterooligomers with myogenin, E12 and ITF2 proteins.

It is found in the nucleus. Functionally, transcriptional regulator. Involved in the initiation of neuronal differentiation. Activates transcription by binding to the E box-containing promoter. The chain is Transcription factor 12 (TCF12) from Gallus gallus (Chicken).